An 823-amino-acid chain; its full sequence is Apoptosis-resistant E3 ubiquitin protein ligase 1 (823 aa).

The Filamin repeat unit spans residues 64–158 (WDWKDPYEVG…VAYSPYYKIF (95 aa)). Positions 315–345 (PPMHMSSSQRRPSTAIEEDDEDSPSECHTPE) are disordered. Positions 483-789 (SISDWSKNFE…THSTLPTAHT (307 aa)) are interaction with SOCS2. Positions 483–823 (SISDWSKNFE…SEGCEGFGML (341 aa)) constitute an HECT domain. Cys790 functions as the Glycyl thioester intermediate in the catalytic mechanism.

Interacts with SOCS2. Interacts (via HECT domain) with HTRA2, DIABLO/SMAC and SEPTIN4; in the cytoplasm following induction of apoptosis. In terms of processing, autoubiquitinated in vitro in the presence of E2 enzyme UBE2D1/UBCH5A. In terms of tissue distribution, detected in brain, testis, heart, liver, lung and kidney with very low levels in skeletal muscle and spleen.

It catalyses the reaction S-ubiquitinyl-[E2 ubiquitin-conjugating enzyme]-L-cysteine + [acceptor protein]-L-lysine = [E2 ubiquitin-conjugating enzyme]-L-cysteine + N(6)-ubiquitinyl-[acceptor protein]-L-lysine.. Its pathway is protein modification; protein ubiquitination. E3 ubiquitin-protein ligase that catalyzes 'Lys-11'- or 'Lys-33'-linked polyubiquitin chains, with some preference for 'Lys-33' linkages. E3 ubiquitin-protein ligases accept ubiquitin from an E2 ubiquitin-conjugating enzyme in the form of a thioester and then directly transfers the ubiquitin to targeted substrates. Ubiquitinates SEPTIN4, DIABLO/SMAC and HTRA2 in vitro. Modulates pulmonary inflammation by targeting SOCS2 for ubiquitination and subsequent degradation by the proteasome. In Mus musculus (Mouse), this protein is Apoptosis-resistant E3 ubiquitin protein ligase 1 (Arel1).